A 365-amino-acid polypeptide reads, in one-letter code: MRMTRRRTKKTEIRNDSDSVRIDIVIEIVKRLPLKDVSRFLLVSKLWSEIIRSPYFIRSFPFLFSSIQPHLLYALNSLDKDKGHHKCCDIHYVSGLICFGYGQQQLITNPRTGKSIYLPKVKSRSKIIQSFFGYDPVYGQYKVLCMSERMNDYLNVPSSEHQVFTLGGVQKVEQSWRMIECNIHHRPKTNSVCMDGVLYYGAFTGGDMLEWCLMRFDVRTEKLDLVSRLNESSIQCYRPGHSPSLIKYHGKVALAFETSLHTFELWVMEDAEKWSKIRFSICHSMHLFGQDDDDAFLITGNIHTGEIIFAPYDCDVRFGMTHVVYYDLKTNRLRFRTVAFDLGTLFPQISVMVPFFDYVESAMLL.

Residues 15–62 (NDSDSVRIDIVIEIVKRLPLKDVSRFLLVSKLWSEIIRSPYFIRSFPF) form the F-box domain.

This is Putative F-box protein At1g31000 from Arabidopsis thaliana (Mouse-ear cress).